We begin with the raw amino-acid sequence, 73 residues long: Metallothionein (73 aa).

Residues cysteine 15, cysteine 20, cysteine 26, cysteine 28, cysteine 32, cysteine 34, cysteine 39, cysteine 46, cysteine 48, cysteine 52, cysteine 54, cysteine 58, cysteine 64, cysteine 66, cysteine 70, and cysteine 72 each coordinate Cd(2+).

It belongs to the metallothionein superfamily. Type 2 family.

In terms of biological role, the metallothioneins are involved in the cellular sequestration of toxic metal ions. In Dreissena polymorpha (Zebra mussel), this protein is Metallothionein.